The primary structure comprises 154 residues: MEKRMSKTELTRHEIREKALQALFPLDFNADLTKQDAIDYALAYDNREIVSEDGEDLVPTYLDLLVGGVCSRKAELDEVITNHLGNNWSMQRLAKIDIVILRLAIFEMLYVSDVPNIVALNEAVELSKKYSDDRSRKFVNGVLSNVMKEIDSEA.

Belongs to the NusB family.

Its function is as follows. Involved in transcription antitermination. Required for transcription of ribosomal RNA (rRNA) genes. Binds specifically to the boxA antiterminator sequence of the ribosomal RNA (rrn) operons. The chain is Transcription antitermination protein NusB from Enterococcus faecalis (strain ATCC 700802 / V583).